We begin with the raw amino-acid sequence, 263 residues long: Achaete-scute homolog 2 (263 aa).

Disordered stretches follow at residues 104-126 and 194-248; these read RRRR…RNER and PPSD…ELSP. Low complexity-rich tracts occupy residues 110-121, 202-220, and 230-247; these read ATEASSSSAAVA, PSAS…SPSP, and SPRS…GELS. Residues 118 to 170 enclose the bHLH domain; that stretch reads AAVARRNERERNRVKLVNLGFQALRQHVPHGGANKKLSKVETLRSAVEYIRAL.

In terms of assembly, efficient DNA binding requires dimerization with another basic helix-loop-helix (bHLH) protein. Forms heterodimers with bHLH transcription factor TCF3. May not heterodimerise with bHLH protein HAND1. As to expression, expressed in follicular T-helper (Tfh) cells.

Its subcellular location is the nucleus. Functionally, transcription factor. Binds to E-box motifs 5'-CANNTG-3' in the regulatory elements of target genes, probably as a heterodimer with another basic helix-loop-helix (bHLH) protein such as the transcription factor TCF3. May bind both open and closed chromatin, acting as a pioneer transcription factor to allow other factors to bind and activate lineage-specific genes. Required during post-implantation development for the generation of some differentiated trophoblast cell types. Transcriptional activity of ASCL2 may be antagonised in a subset of trophoblast cells by bHLH transcription factor HAND1, perhaps by competing for dimerization with other bHLH proteins. Involved in differentiation and function of follicular T-helper (Tfh) cells, thereby playing a role in germinal center responses; probably modulates expression of genes involved in Tfh cell function, such as BCL6. May also act as a suppressor of Th1-, Th2- and Th17-cell differentiation. Induces the formation of stem cells in intestinal crypts in vitro, synergistically activating transcription of target genes, such as SOX9, together with TCF4/beta-catenin. May form a bistable transcriptional switch, controlling expression of its own gene together with Wnt/R-spondin signaling, and thereby maintaining stem cell characteristics. Modulates expression of target genes, including perhaps down-regulating EGR1/Krox24 and chemokine CXCL10/Mob-1 and up-regulating CXCR4 and CDKN1C/p57kip2, in Schwann cells. May play a role in reducing proliferation of Schwann cells, perhaps acting via modulation of expression of CDKN1C. May be dispensable for blastocyst formation and later embryonic function. May be involved in the determination of neuronal precursors. The polypeptide is Achaete-scute homolog 2 (Ascl2) (Mus musculus (Mouse)).